A 756-amino-acid polypeptide reads, in one-letter code: MPSKSIADHHAGYGVALAIVALLLIHGTALVMIFSDIKVGSQPQDLKDQLSYPSNYDAYTSHISGADHGHSEMWTDINPPSRKPLHGDSLDIKTNEEHITLSSPRTSTKTTNENGHEKDSKDIKFSFSTNRHPISVSPTTDIVSIAVSHNNPMGGDTWQVSRNGPNTVHVPIYGKPILRLNGEELSTQIAHMSMWDELAGSFKTFAATAESFHMITTTHLFNKTLHKDVFFVVHGWHGITNDTHIFLSAVRLLTRMMPTSCIIYLSWESQGAIGTAADAILLARRVNITQFLSAMPSQLRIHCMGHSLGSYVCGSICRQYHSLMSGICKGILGINPYEVLFSAPDLYARMHVDTIRLDAEYVAIFATTSQYLSTSDSDADEYIIVNDAVFMNSVCANPYEWNIHLCTTGYGELKSCERFGAANVTTSPGVVEDGSQICLRMLPIIAVLQSLDLKSSYPLLRIAPPDASNEVTHLPSIWNIYVVGKDYRYSTYAKNDSLWYSSAICAGDTGFSIPSVFTVFAPPSISLRVRAAVQQSSTIYKNITIYSAFLKNTSRYYPTVTLETLGPILSAYAWRGRMHNSSYYPLPLPEQEIMEYKCTHIDRTYTCIPTDLIYATTVWRQIFSMGHIFPVYPSNNCLPYRPTNAIIWRRPVLEIGVWNNITASFQRNKQLMALTFENHNTATNTTLLTFHDVCRESKIRSVVYFEYDWLETSMNITVLIPGLYTLRWFFPFEIIEMPVRVSYNNSFAQALTTSRV.

The N-terminal stretch at 1-30 (MPSKSIADHHAGYGVALAIVALLLIHGTAL) is a signal peptide. Residues 96 to 120 (EEHITLSSPRTSTKTTNENGHEKDS) form a disordered region. Polar residues predominate over residues 100 to 113 (TLSSPRTSTKTTNE). Asn-222, Asn-241, Asn-287, Asn-423, Asn-495, Asn-542, Asn-552, Asn-580, Asn-660, Asn-684, Asn-715, and Asn-744 each carry an N-linked (GlcNAc...) asparagine; by host glycan.

It is found in the secreted. Its function is as follows. May play a role in host immune modulation since the protein is secreted and provides an advantage for growth in vivo while it is completely dispensable in cell culture. The protein is Virulence factor MDV010 (MDV010) of Gallid herpesvirus 2 (strain Chicken/Md5/ATCC VR-987) (GaHV-2).